The sequence spans 247 residues: ATP synthase subunit a, chloroplastic (247 aa).

5 consecutive transmembrane segments (helical) span residues 38 to 58 (QVLI…TVAV), 95 to 115 (VPFI…GALL), 134 to 154 (INTT…AGLT), 199 to 219 (LVVV…VMFL), and 220 to 240 (GLFT…AYIG).

This sequence belongs to the ATPase A chain family. As to quaternary structure, F-type ATPases have 2 components, CF(1) - the catalytic core - and CF(0) - the membrane proton channel. CF(1) has five subunits: alpha(3), beta(3), gamma(1), delta(1), epsilon(1). CF(0) has four main subunits: a, b, b' and c.

It is found in the plastid. The protein resides in the chloroplast thylakoid membrane. Functionally, key component of the proton channel; it plays a direct role in the translocation of protons across the membrane. This is ATP synthase subunit a, chloroplastic from Platanus occidentalis (Sycamore).